The chain runs to 931 residues: 3'-5' exonuclease DinG (931 aa).

In terms of domain architecture, Exonuclease spans 7-162 (VVIDVETTGN…DSDAEVTGLI (156 aa)). A Helicase ATP-binding domain is found at 250-510 (LSELMPGYEK…KKMRQLFQRN (261 aa)). 284-291 (APPGIGKT) provides a ligand contact to ATP. A DEAH box motif is present at residues 462–465 (DEAH). One can recognise a Helicase C-terminal domain in the interval 741–897 (DTARYIELMA…TIIILDRRIK (157 aa)).

The protein belongs to the helicase family. DinG subfamily. Type 2 sub-subfamily.

The protein resides in the cytoplasm. Its function is as follows. 3'-5' exonuclease. The protein is 3'-5' exonuclease DinG of Bacillus subtilis (strain 168).